Here is a 479-residue protein sequence, read N- to C-terminus: UDP-N-acetylmuramate--L-alanine ligase (479 aa).

An ATP-binding site is contributed by 126 to 132 (GTHGKTT).

Belongs to the MurCDEF family.

The protein resides in the cytoplasm. The catalysed reaction is UDP-N-acetyl-alpha-D-muramate + L-alanine + ATP = UDP-N-acetyl-alpha-D-muramoyl-L-alanine + ADP + phosphate + H(+). Its pathway is cell wall biogenesis; peptidoglycan biosynthesis. Functionally, cell wall formation. This is UDP-N-acetylmuramate--L-alanine ligase from Alkalilimnicola ehrlichii (strain ATCC BAA-1101 / DSM 17681 / MLHE-1).